We begin with the raw amino-acid sequence, 174 residues long: Putative NADH dehydrogenase/NAD(P)H nitroreductase AF_2267 (174 aa).

107 to 112 contacts NAD(+); sequence AARCLG.

Belongs to the nitroreductase family. The cofactor is FMN.

In Archaeoglobus fulgidus (strain ATCC 49558 / DSM 4304 / JCM 9628 / NBRC 100126 / VC-16), this protein is Putative NADH dehydrogenase/NAD(P)H nitroreductase AF_2267.